Here is a 280-residue protein sequence, read N- to C-terminus: Bifunctional protein FolD (280 aa).

NADP(+) contacts are provided by residues 164-166 (GRS), serine 189, and valine 230.

The protein belongs to the tetrahydrofolate dehydrogenase/cyclohydrolase family. As to quaternary structure, homodimer.

The enzyme catalyses (6R)-5,10-methylene-5,6,7,8-tetrahydrofolate + NADP(+) = (6R)-5,10-methenyltetrahydrofolate + NADPH. It carries out the reaction (6R)-5,10-methenyltetrahydrofolate + H2O = (6R)-10-formyltetrahydrofolate + H(+). Its pathway is one-carbon metabolism; tetrahydrofolate interconversion. In terms of biological role, catalyzes the oxidation of 5,10-methylenetetrahydrofolate to 5,10-methenyltetrahydrofolate and then the hydrolysis of 5,10-methenyltetrahydrofolate to 10-formyltetrahydrofolate. This chain is Bifunctional protein FolD, found in Geotalea daltonii (strain DSM 22248 / JCM 15807 / FRC-32) (Geobacter daltonii).